A 347-amino-acid polypeptide reads, in one-letter code: 4-hydroxy-3-methylbut-2-en-1-yl diphosphate synthase (flavodoxin) (347 aa).

[4Fe-4S] cluster is bound by residues cysteine 259, cysteine 262, cysteine 294, and glutamate 301.

It belongs to the IspG family. [4Fe-4S] cluster is required as a cofactor.

The catalysed reaction is (2E)-4-hydroxy-3-methylbut-2-enyl diphosphate + oxidized [flavodoxin] + H2O + 2 H(+) = 2-C-methyl-D-erythritol 2,4-cyclic diphosphate + reduced [flavodoxin]. It functions in the pathway isoprenoid biosynthesis; isopentenyl diphosphate biosynthesis via DXP pathway; isopentenyl diphosphate from 1-deoxy-D-xylulose 5-phosphate: step 5/6. Its function is as follows. Converts 2C-methyl-D-erythritol 2,4-cyclodiphosphate (ME-2,4cPP) into 1-hydroxy-2-methyl-2-(E)-butenyl 4-diphosphate. The chain is 4-hydroxy-3-methylbut-2-en-1-yl diphosphate synthase (flavodoxin) from Caldicellulosiruptor saccharolyticus (strain ATCC 43494 / DSM 8903 / Tp8T 6331).